The sequence spans 569 residues: Urease subunit alpha (569 aa).

Residues 131–569 (GGVDAHIHFI…VAMAQRYFLF (439 aa)) enclose the Urease domain. H136, H138, and K219 together coordinate Ni(2+). K219 is subject to N6-carboxylysine. H221 contacts substrate. Ni(2+)-binding residues include H248 and H274. H322 serves as the catalytic Proton donor. Ni(2+) is bound at residue D362.

Belongs to the metallo-dependent hydrolases superfamily. Urease alpha subunit family. Heterotrimer of UreA (gamma), UreB (beta) and UreC (alpha) subunits. Three heterotrimers associate to form the active enzyme. Ni cation serves as cofactor. Carboxylation allows a single lysine to coordinate two nickel ions.

It localises to the cytoplasm. It carries out the reaction urea + 2 H2O + H(+) = hydrogencarbonate + 2 NH4(+). Its pathway is nitrogen metabolism; urea degradation; CO(2) and NH(3) from urea (urease route): step 1/1. The polypeptide is Urease subunit alpha (Geobacillus kaustophilus (strain HTA426)).